The chain runs to 153 residues: Protein Smg homolog (153 aa).

This sequence belongs to the Smg family.

This chain is Protein Smg homolog, found in Neisseria gonorrhoeae (strain ATCC 700825 / FA 1090).